We begin with the raw amino-acid sequence, 121 residues long: Putative RNase MJ0127 (121 aa).

Residues Arg-76 and His-81 contribute to the active site. Positions 76–83 (RDKLIHHY) match the RX(4)HXY motif motif. Tyr-83 bears the O-di-AMP-tyrosine mark.

It belongs to the HepT RNase toxin family. As to quaternary structure, homodimer, probably forms a complex with cognate antitoxin MJ0128. Post-translationally, modified by cognate antitoxin MJ0128; probably at least 2 successive AMPylation events occur on Tyr-83.

Functionally, probable toxic component of a putative type VII toxin-antitoxin (TA) system, probably an RNase. Probably neutralized by cognate antitoxin MJ0128. Neutralization may be due to AMPylation by MJ0128. The sequence is that of Putative RNase MJ0127 from Methanocaldococcus jannaschii (strain ATCC 43067 / DSM 2661 / JAL-1 / JCM 10045 / NBRC 100440) (Methanococcus jannaschii).